The following is a 263-amino-acid chain: uncharacterized protein (263 aa).

The tract at residues 22 to 44 (IDGSDDQSDRTRSSSGDSTSNSL) is disordered. Residues 34 to 43 (SSSGDSTSNS) show a composition bias toward low complexity.

Its subcellular location is the mitochondrion. This is an uncharacterized protein from Schizosaccharomyces pombe (strain 972 / ATCC 24843) (Fission yeast).